We begin with the raw amino-acid sequence, 166 residues long: KH homology domain-containing protein 1C (166 aa).

Residues 19–78 (PLVFDMEEDKEDYIFGPHDEYLHTLEVHSNTLIQLERWFTPTGQTRVTVVGPLKARLWVM) enclose the KH; atypical domain.

Belongs to the KHDC1 family.

This Mus musculus (Mouse) protein is KH homology domain-containing protein 1C (Khdc1c).